The primary structure comprises 833 residues: Multiphosphoryl transfer protein 2 (833 aa).

In terms of domain architecture, HPr spans 2-91 (ALIVEFICEL…QWLRDEFPHC (90 aa)). His-16 acts as the Tele-phosphohistidine intermediate; for HPr activity in catalysis. Position 16 is a phosphohistidine; by EI (His-16). The PTS EI stretch occupies residues 143–653 (LGNLPAAKGV…AAKARMAQLD (511 aa)). His-301 functions as the Tele-phosphohistidine intermediate; for PTS EI activity in the catalytic mechanism. At His-301 the chain carries Phosphohistidine; by autocatalysis. Phosphoenolpyruvate is bound by residues Arg-408 and Arg-444. Glu-543 and Asp-567 together coordinate Mg(2+). Phosphoenolpyruvate is bound by residues 566–567 (ND) and Arg-577. Cys-614 functions as the Proton donor; for EI activity in the catalytic mechanism. In terms of domain architecture, PTS EIIA type-2 spans 688–830 (PLVTAECITL…DAIASLLQHE (143 aa)). The Tele-phosphohistidine intermediate; for PTS EIIA activity role is filled by His-750. Residue His-750 is modified to Phosphohistidine; by HPr.

The protein belongs to the PEP-utilizing enzyme family. Mg(2+) is required as a cofactor.

Its subcellular location is the cytoplasm. The enzyme catalyses L-histidyl-[protein] + phosphoenolpyruvate = N(pros)-phospho-L-histidyl-[protein] + pyruvate. It carries out the reaction D-fructose(out) + N(pros)-phospho-L-histidyl-[protein] = D-fructose 1-phosphate(in) + L-histidyl-[protein]. In terms of biological role, multifunctional protein that includes general (non sugar-specific) and sugar-specific components of the phosphoenolpyruvate-dependent sugar phosphotransferase system (sugar PTS). This major carbohydrate active transport system catalyzes the phosphorylation of incoming sugar substrates concomitantly with their translocation across the cell membrane. The enzyme II FrwABC PTS system is involved in fructose transport. The protein is Multiphosphoryl transfer protein 2 of Escherichia coli (strain K12).